We begin with the raw amino-acid sequence, 699 residues long: Elongation factor G (699 aa).

Residues 8-283 enclose the tr-type G domain; it reads EQIRNIGICA…AIVDFLPSPI (276 aa). GTP contacts are provided by residues 17–24, 81–85, and 135–138; these read AHIDAGKT, DTPGH, and NKMD.

The protein belongs to the TRAFAC class translation factor GTPase superfamily. Classic translation factor GTPase family. EF-G/EF-2 subfamily.

The protein resides in the cytoplasm. In terms of biological role, catalyzes the GTP-dependent ribosomal translocation step during translation elongation. During this step, the ribosome changes from the pre-translocational (PRE) to the post-translocational (POST) state as the newly formed A-site-bound peptidyl-tRNA and P-site-bound deacylated tRNA move to the P and E sites, respectively. Catalyzes the coordinated movement of the two tRNA molecules, the mRNA and conformational changes in the ribosome. The chain is Elongation factor G (fusA) from Rickettsia prowazekii (strain Madrid E).